The sequence spans 631 residues: 30-kDa cleavage and polyadenylation specificity factor 30 (631 aa).

The tract at residues 12-38 (EGGLDSGPVQNTASVPVAPPENSSSAA) is disordered. C3H1-type zinc fingers lie at residues 60–87 (SFRQ…HQFD), 88–112 (KARM…VYKH), and 114–141 (NEDI…HAKL). The disordered stretch occupies residues 179-234 (QDRPQGQVPMQGQPQESGNLQQQQQQQPQQSQHQVSQTLIPNPADQTNRTSHPLPQ). Low complexity predominate over residues 182 to 215 (PQGQVPMQGQPQESGNLQQQQQQQPQQSQHQVSQ). Residues 216-231 (TLIPNPADQTNRTSHP) show a composition bias toward polar residues. One can recognise a YTH domain in the interval 237–372 (NRYFVVKSNN…SVGEQLASLL (136 aa)). Residues 392 to 407 (EEEKAKGVNPESRAEN) show a composition bias toward basic and acidic residues. Disordered stretches follow at residues 392–447 (EEEK…RGIM) and 541–631 (PHMG…KKRR). Residues 412–432 (PFEDNEEEEEEEDESEEEEES) are compositionally biased toward acidic residues. A compositionally biased stretch (basic and acidic residues) spans 573-583 (KTPERSDERGV). Residues Ser-610 and Ser-612 each carry the phosphoserine modification. The span at 621–631 (RSRHGEGKKRR) shows a compositional bias: basic residues.

Belongs to the CPSF4/YTH1 family. Component of the cleavage and polyadenylation specificity factor (CPSF) complex. Can form homodimers. Binds to calmodulin. Forms a complex with cleavage and polyadenylation specificity factor (CPSF) subunits CPSF73-I, CPSF73-II, CPSF100, CPSF160, CFIS2, FIPS3, FIPS5, PAPS2, PAPS3, CLPS3, PCFS1, PCFS4, CSTF50 and CSTF77. As to expression, expressed in seedlings, roots, leaves, siliques, stems and flowers.

The protein localises to the nucleus. It localises to the cytoplasm. With respect to regulation, endonuclease activity is repressed by the N-terminal domain of FIPS5. Nuclease activity is inhibited by zinc (&gt;100 uM), cadmium in a progressive manner (50 percent activity at 1 mM Cd(2+)), and high salt levels (e.g. KCl or NaCl &gt;600 mM). Stimulated by ATP in the presence of Zn(2+), even at inhibitory zinc concentrations. Elevated temperatures prevent RNA-binding at 55 degrees Celsius, but endonuclease activity at 70 degrees Celsius. The sulfhydryl reagent dithiothreitol (DTT) inhibits both RNA-binding and nuclease activities. Functionally, component of the cleavage and polyadenylation specificity factor (CPSF) complex that play a key role in pre-mRNA 3'-end formation. May interact with poly(A) polymerase and other factors to bring about cleavage and poly(A) addition. Mediates poly(A) site selection. Binds RNA in a calcium-dependent manner. Exhibits endonuclease activity with an ability to nick and degrade linear as well as circular single-stranded RNA that leaves RNA 3' ends with hydroxyl groups, thus mediating processing of the pre-mRNA as a prelude to the polyadenylation. Involved in the post-transcriptional control, probably via poly(A) addition, of the responses of plants to stress, especially genes mediating tolerance to oxidative stress. Plays a role in the regulation of salicylic acid (SA) production via the control of messenger RNA 3' end processing, thus being a key component of programmed cell death and plant immune responses required for resistance to virulent Pseudomonas syringae pv tomato DC3000 (Pst). The polypeptide is 30-kDa cleavage and polyadenylation specificity factor 30 (Arabidopsis thaliana (Mouse-ear cress)).